Consider the following 209-residue polypeptide: Ribosomal RNA large subunit methyltransferase E (209 aa).

Residues Gly63, Trp65, Asp83, Asp99, and Asp124 each coordinate S-adenosyl-L-methionine. Catalysis depends on Lys164, which acts as the Proton acceptor.

Belongs to the class I-like SAM-binding methyltransferase superfamily. RNA methyltransferase RlmE family.

Its subcellular location is the cytoplasm. The enzyme catalyses uridine(2552) in 23S rRNA + S-adenosyl-L-methionine = 2'-O-methyluridine(2552) in 23S rRNA + S-adenosyl-L-homocysteine + H(+). In terms of biological role, specifically methylates the uridine in position 2552 of 23S rRNA at the 2'-O position of the ribose in the fully assembled 50S ribosomal subunit. The polypeptide is Ribosomal RNA large subunit methyltransferase E (Aeromonas hydrophila subsp. hydrophila (strain ATCC 7966 / DSM 30187 / BCRC 13018 / CCUG 14551 / JCM 1027 / KCTC 2358 / NCIMB 9240 / NCTC 8049)).